Consider the following 341-residue polypeptide: Src kinase-associated phosphoprotein 2 (341 aa).

The disordered stretch occupies residues 54–95 (FKDRRDEEFPEPDEADTNDGGSLHSEQTDRDDENAYDGVQQS). The span at 61–70 (EFPEPDEADT) shows a compositional bias: acidic residues. The region spanning 105–208 (AVLKSGYLEK…WVEHIDFLIK (104 aa)) is the PH domain. The disordered stretch occupies residues 246–265 (EEDVPQPSKPKVTLVNKPPP). One can recognise an SH3 domain in the interval 279–340 (DYANYFQGLW…PKEYLLELYV (62 aa)).

This sequence belongs to the SKAP family. Post-translationally, phosphorylated on tyrosines.

Its subcellular location is the cytoplasm. In terms of biological role, may be involved in B-cell and macrophage adhesion processes. May play a role in src signaling pathway. The polypeptide is Src kinase-associated phosphoprotein 2 (skap2) (Danio rerio (Zebrafish)).